Here is a 207-residue protein sequence, read N- to C-terminus: Small ribosomal subunit protein uS4 (207 aa).

The disordered stretch occupies residues 30–53; the sequence is DKSKFDTKPGQHGRTSGQRTSDFG. Residues 42-52 are compositionally biased toward polar residues; sequence GRTSGQRTSDF. The S4 RNA-binding domain occupies 97-157; the sequence is SRLDNVVYRM…EKSKKQARIV (61 aa).

Belongs to the universal ribosomal protein uS4 family. In terms of assembly, part of the 30S ribosomal subunit. Contacts protein S5. The interaction surface between S4 and S5 is involved in control of translational fidelity.

Its function is as follows. One of the primary rRNA binding proteins, it binds directly to 16S rRNA where it nucleates assembly of the body of the 30S subunit. With S5 and S12 plays an important role in translational accuracy. The chain is Small ribosomal subunit protein uS4 from Delftia acidovorans (strain DSM 14801 / SPH-1).